A 278-amino-acid polypeptide reads, in one-letter code: Large ribosomal subunit protein uL2 (278 aa).

2 disordered regions span residues 33 to 57 (LIRP…KGGG) and 224 to 278 (VVMN…GKKR). Positions 45–57 (AHGRITTRHKGGG) are enriched in basic residues. The segment covering 253–268 (PEGRTRKPNKASDKLI) has biased composition (basic and acidic residues). The segment covering 269–278 (VRRRRTGKKR) has biased composition (basic residues).

The protein belongs to the universal ribosomal protein uL2 family. As to quaternary structure, part of the 50S ribosomal subunit. Forms a bridge to the 30S subunit in the 70S ribosome.

Functionally, one of the primary rRNA binding proteins. Required for association of the 30S and 50S subunits to form the 70S ribosome, for tRNA binding and peptide bond formation. It has been suggested to have peptidyltransferase activity; this is somewhat controversial. Makes several contacts with the 16S rRNA in the 70S ribosome. The chain is Large ribosomal subunit protein uL2 from Mycobacteroides abscessus (strain ATCC 19977 / DSM 44196 / CCUG 20993 / CIP 104536 / JCM 13569 / NCTC 13031 / TMC 1543 / L948) (Mycobacterium abscessus).